Consider the following 919-residue polypeptide: MTDFLRDDIRFLGQILGEVIAEQEGQEVYELVEQARLTSFDIAKGNAEMDSLVQVFDGITPAKATPIARAFSHFALLANLAEDLYDEELREQALDAGDTPPDSTLDATWLKLNEGNVGAEAVADVLRNAEVAPVLTAHPTETRRRTVFDAQKWITTHMRERHALQSAEPTARTQSKLDEIEKNIRRRITILWQTALIRVARPRIEDEIEVGLRYYKLSLLEEIPRINRDVAVELRERFGEGVPLKPVVKPGSWIGGDHDGNPYVTAETVEYSTHRAAETVLKYYARQLHSLEHELSLSDRMNKVTPQLLALADAGHNDVPSRVDEPYRRAVHGVRGRILATTAELIGEDAVEGVWFKVFTPYASPEEFLNDALTIDHSLRESKDVLIADDRLSVLISAIESFGFNLYALDLRQNSESYEDVLTELFERAQVTANYRELSEAEKLEVLLKELRSPRPLIPHGSDEYSEVTDRELGIFRTASEAVKKFGPRMVPHCIISMASSVTDVLEPMVLLKEFGLIAANGDNPRGTVDVIPLFETIEDLQAGAGILDELWKIDLYRNYLLQRDNVQEVMLGYSDSNKDGGYFSANWALYDAELQLVELCRSAGVKLRLFHGRGGTVGRGGGPSYDAILAQPRGAVQGSVRITEQGEIISAKYGNPETARRNLEALVSATLEASLLDVSELTDHQRAYDIMSEISELSLKKYASLVHEDQGFIDYFTQSTPLQEIGSLNIGSRPSSRKQTSSVEDLRAIPWVLSWSQSRVMLPGWFGVGTALEQWIGEGEQATQRIAELQTLNESWPFFTSVLDNMAQVMSKAELRLAKLYADLIPDTEVAERVYSVIREEYFLTKKMFCVITGSDDLLDDNPLLARSVQRRYPYLLPLNVIQVEMMRRYRKGDQSEQVSRNIQLTMNGLSTALRNSG.

Active-site residues include His138 and Lys579.

This sequence belongs to the PEPCase type 1 family. Mg(2+) is required as a cofactor.

It catalyses the reaction oxaloacetate + phosphate = phosphoenolpyruvate + hydrogencarbonate. With respect to regulation, activity not stimulated by acetyl-CoA in the absence of any allosteric inhibitor, while the corresponding protein from E.coli is strongly stimulated. Functionally, forms oxaloacetate, a four-carbon dicarboxylic acid source for the tricarboxylic acid cycle. The sequence is that of Phosphoenolpyruvate carboxylase (ppc) from Corynebacterium glutamicum (strain ATCC 13032 / DSM 20300 / JCM 1318 / BCRC 11384 / CCUG 27702 / LMG 3730 / NBRC 12168 / NCIMB 10025 / NRRL B-2784 / 534).